A 224-amino-acid polypeptide reads, in one-letter code: Cytidylate kinase (224 aa).

Position 11–19 (11–19 (GPASAGKST)) interacts with ATP.

It belongs to the cytidylate kinase family. Type 1 subfamily.

The protein resides in the cytoplasm. It carries out the reaction CMP + ATP = CDP + ADP. The enzyme catalyses dCMP + ATP = dCDP + ADP. The chain is Cytidylate kinase from Ligilactobacillus salivarius (strain UCC118) (Lactobacillus salivarius).